A 170-amino-acid polypeptide reads, in one-letter code: Small ribosomal subunit protein uS5 (170 aa).

In terms of domain architecture, S5 DRBM spans 11 to 74 (ILEKLVHINR…ETARRVLIHV (64 aa)).

Belongs to the universal ribosomal protein uS5 family. As to quaternary structure, part of the 30S ribosomal subunit. Contacts proteins S4 and S8.

Its function is as follows. With S4 and S12 plays an important role in translational accuracy. In terms of biological role, located at the back of the 30S subunit body where it stabilizes the conformation of the head with respect to the body. The polypeptide is Small ribosomal subunit protein uS5 (Pelagibacter ubique (strain HTCC1062)).